A 609-amino-acid polypeptide reads, in one-letter code: UvrABC system protein C (609 aa).

The region spanning 16-94 is the GIY-YIG domain; sequence SSAGVYRMYD…IKQYMPKYNV (79 aa). In terms of domain architecture, UVR spans 203 to 238; that stretch reads KQVISELVAKMEEAAEQQAYEQAARFRDQIMALRRV.

Belongs to the UvrC family. In terms of assembly, interacts with UvrB in an incision complex.

It localises to the cytoplasm. The UvrABC repair system catalyzes the recognition and processing of DNA lesions. UvrC both incises the 5' and 3' sides of the lesion. The N-terminal half is responsible for the 3' incision and the C-terminal half is responsible for the 5' incision. This chain is UvrABC system protein C, found in Shewanella sp. (strain MR-4).